A 303-amino-acid chain; its full sequence is uncharacterized protein (303 aa).

Ser63 carries the phosphoserine modification.

It belongs to the HAD-like hydrolase superfamily.

It is found in the cytoplasm. The protein resides in the nucleus. This is an uncharacterized protein from Schizosaccharomyces pombe (strain 972 / ATCC 24843) (Fission yeast).